The primary structure comprises 60 residues: Large ribosomal subunit protein bL32 (60 aa).

Residues 1–19 (MAVPKRRTSKRRKRARNTH) show a composition bias toward basic residues. The segment at 1–20 (MAVPKRRTSKRRKRARNTHK) is disordered.

The protein belongs to the bacterial ribosomal protein bL32 family.

The chain is Large ribosomal subunit protein bL32 from Gemmatimonas aurantiaca (strain DSM 14586 / JCM 11422 / NBRC 100505 / T-27).